A 1162-amino-acid chain; its full sequence is Carbamoyl phosphate synthase large chain (1162 aa).

The tract at residues Met-1–Glu-456 is carboxyphosphate synthetic domain. The ATP site is built by Arg-129, Arg-222, Gly-228, Gly-229, Glu-261, Val-263, Glu-268, Gly-294, Val-295, His-296, Gln-338, and Glu-352. The ATP-grasp 1 domain occupies Glu-186 to Val-381. Mg(2+)-binding residues include Gln-338, Glu-352, and Asn-354. Positions 338, 352, and 354 each coordinate Mn(2+). An oligomerization domain region spans residues Thr-457–Ala-613. The segment at Glu-614–Gly-1025 is carbamoyl phosphate synthetic domain. The 213-residue stretch at Gln-742–Ala-954 folds into the ATP-grasp 2 domain. ATP-binding residues include Arg-778, Thr-838, Leu-840, Glu-845, Gly-870, Ile-871, His-872, Ser-873, Gln-913, and Glu-925. Positions 913, 925, and 927 each coordinate Mg(2+). Positions 913, 925, and 927 each coordinate Mn(2+). Residues Val-1026 to Ser-1162 form the MGS-like domain. Positions Val-1026 to Ser-1162 are allosteric domain.

The protein belongs to the CarB family. Composed of two chains; the small (or glutamine) chain promotes the hydrolysis of glutamine to ammonia, which is used by the large (or ammonia) chain to synthesize carbamoyl phosphate. Tetramer of heterodimers (alpha,beta)4. It depends on Mg(2+) as a cofactor. Mn(2+) is required as a cofactor.

It carries out the reaction hydrogencarbonate + L-glutamine + 2 ATP + H2O = carbamoyl phosphate + L-glutamate + 2 ADP + phosphate + 2 H(+). It catalyses the reaction hydrogencarbonate + NH4(+) + 2 ATP = carbamoyl phosphate + 2 ADP + phosphate + 2 H(+). The protein operates within amino-acid biosynthesis; L-arginine biosynthesis; carbamoyl phosphate from bicarbonate: step 1/1. It participates in pyrimidine metabolism; UMP biosynthesis via de novo pathway; (S)-dihydroorotate from bicarbonate: step 1/3. Large subunit of the glutamine-dependent carbamoyl phosphate synthetase (CPSase). CPSase catalyzes the formation of carbamoyl phosphate from the ammonia moiety of glutamine, carbonate, and phosphate donated by ATP, constituting the first step of 2 biosynthetic pathways, one leading to arginine and/or urea and the other to pyrimidine nucleotides. The large subunit (synthetase) binds the substrates ammonia (free or transferred from glutamine from the small subunit), hydrogencarbonate and ATP and carries out an ATP-coupled ligase reaction, activating hydrogencarbonate by forming carboxy phosphate which reacts with ammonia to form carbamoyl phosphate. In Brucella melitensis biotype 1 (strain ATCC 23456 / CCUG 17765 / NCTC 10094 / 16M), this protein is Carbamoyl phosphate synthase large chain.